Reading from the N-terminus, the 575-residue chain is Probable ferredoxin/ferredoxin--NADP reductase (575 aa).

4Fe-4S ferredoxin-type domains follow at residues 2 to 29 and 37 to 66; these read PHVI…PTPD and EMLY…PNTR. C9, C15, C19, C46, C49, C52, and C56 together coordinate [4Fe-4S] cluster. Residues 115 to 575 form a ferredoxin--NADP reductase region; that stretch reads VAVVGSGPAA…GQPIVLTVPL (461 aa). Positions 123, 143, 151, and 187 each coordinate FAD. Residues R213, 258-261, 302-303, and E314 contribute to the NADP(+) site; these read NGNV and RR. Residues W456 and 463–465 contribute to the FAD site; that span reads GFI. G463 is an NADP(+) binding site.

The protein in the C-terminal section; belongs to the ferredoxin--NADP reductase family. It depends on [4Fe-4S] cluster as a cofactor. The cofactor is FAD.

It catalyses the reaction 2 reduced [2Fe-2S]-[ferredoxin] + NADP(+) + H(+) = 2 oxidized [2Fe-2S]-[ferredoxin] + NADPH. The chain is Probable ferredoxin/ferredoxin--NADP reductase (fprB) from Mycobacterium bovis (strain ATCC BAA-935 / AF2122/97).